The following is a 392-amino-acid chain: Chloramphenicol resistance protein (392 aa).

Transmembrane regions (helical) follow at residues 6-26, 42-62, 71-91, 100-120, 129-149, 160-180, 205-225, 239-259, 268-288, 294-314, 332-352, and 358-378; these read YLLAVAVCAMGTSEFMLAGLV, TLTSAFATGMIVGAPLVAALA, LLGFILAFAAAHAVGAGTTSF, VAALANAGFLAVALTTAAALV, LAVLLSGTTVATVAGVPGGSL, FWAVAVCCLPAAFGVLKAIPA, LLLAMLLGALVNAATFASFTF, LWISVALVLFGAGSFAGVTVA, AQVLAVAGPLLLVGWPALAML, ALLTLVFVQGALSFALGSTLI, ATAALNVGAAAGPLVAATTLG, and LGPLWASGLLVAVALLVAFPF.

It belongs to the major facilitator superfamily.

The protein localises to the cell membrane. The chain is Chloramphenicol resistance protein (cmlR) from Streptomyces lividans.